Reading from the N-terminus, the 157-residue chain is Small ribosomal subunit protein uS7 (157 aa).

The protein belongs to the universal ribosomal protein uS7 family. As to quaternary structure, part of the 30S ribosomal subunit. Contacts proteins S9 and S11.

Functionally, one of the primary rRNA binding proteins, it binds directly to 16S rRNA where it nucleates assembly of the head domain of the 30S subunit. Is located at the subunit interface close to the decoding center, probably blocks exit of the E-site tRNA. This Borrelia garinii subsp. bavariensis (strain ATCC BAA-2496 / DSM 23469 / PBi) (Borreliella bavariensis) protein is Small ribosomal subunit protein uS7.